The primary structure comprises 96 residues: Integration host factor subunit beta (96 aa).

The segment at 59–86 is disordered; the sequence is RVGRNPKTGETVELDGKHVPHFKPGKEL. A compositionally biased stretch (basic and acidic residues) spans 72–86; that stretch reads LDGKHVPHFKPGKEL.

Belongs to the bacterial histone-like protein family. In terms of assembly, heterodimer of an alpha and a beta chain.

Its function is as follows. This protein is one of the two subunits of integration host factor, a specific DNA-binding protein that functions in genetic recombination as well as in transcriptional and translational control. In Pseudoalteromonas atlantica (strain T6c / ATCC BAA-1087), this protein is Integration host factor subunit beta.